Consider the following 421-residue polypeptide: Mannose-1-phosphate guanyltransferase alpha-A (421 aa).

Belongs to the transferase hexapeptide repeat family.

The catalysed reaction is alpha-D-mannose 1-phosphate + GTP + H(+) = GDP-alpha-D-mannose + diphosphate. It participates in nucleotide-sugar biosynthesis; GDP-alpha-D-mannose biosynthesis; GDP-alpha-D-mannose from alpha-D-mannose 1-phosphate (GTP route): step 1/1. This is Mannose-1-phosphate guanyltransferase alpha-A (gmppa-a) from Xenopus laevis (African clawed frog).